The chain runs to 707 residues: Casein kinase 1-like protein HD16 (707 aa).

Residues 19–67 (YDVQDADPAASPVSPAPRGRTGRRGGAAAGRGNKTVAEGGGRKALKPRG) are disordered. Over residues 24-37 (ADPAASPVSPAPRG) the composition is skewed to low complexity. One can recognise a Protein kinase domain in the interval 147–425 (YITDRKLGKG…KLISLFDGLI (279 aa)). Residues 153-161 (LGKGGFGQV) and lysine 184 each bind ATP. Residue aspartate 276 is the Proton acceptor of the active site.

The protein belongs to the protein kinase superfamily. CK1 Ser/Thr protein kinase family. Casein kinase I subfamily. As to quaternary structure, monomer. Interacts with GHD7 (via C-terminus). Interacts with SLR1. Autophosphorylated. As to expression, expressed in roots, leaves and stems. Expressed in leaf vascular bundles, and proximal regions of the shoot and roots.

It is found in the cytoplasm. The protein resides in the nucleus. It carries out the reaction L-seryl-[protein] + ATP = O-phospho-L-seryl-[protein] + ADP + H(+). The enzyme catalyses L-threonyl-[protein] + ATP = O-phospho-L-threonyl-[protein] + ADP + H(+). Its function is as follows. Casein kinases are operationally defined by their preferential utilization of acidic proteins such as caseins as substrates. It can phosphorylate a large number of proteins. Can phosphorylate casein on threonine residues in vitro. Involved in the regulation of flowering time through gibberellin (GA) signaling, and independently of photoperiod. Phosphorylates the DELLA protein SLR1, stabilizing SLR1 protein and sustaining SLR1 activity as repressor of GA signaling. Required for normal development of male floral organs and grains, through modulation of GA signaling. Targeted and repressed by the homeobox protein HAZ1 during GA signaling. Can phosphorylate phosvitin and SLR1 in vitro. Is not required for clock function in either the presence or the absence of light signals. Involved in a genetic control pathway for photoperiodic flowering under long day (LD) conditions that includes HD1, GHD7, HD5 and HD2. Phosphorylates and activates GHD7, a major floral repressor under LD conditions. Phosphorylation of GHD7 enhances its function in the repression of EHD1, HD3A and HD3B/RFT1, and obviously delaying flowering. In Oryza sativa subsp. japonica (Rice), this protein is Casein kinase 1-like protein HD16.